The following is a 340-amino-acid chain: Extracellular matrix protein-binding protein emp (340 aa).

The N-terminal stretch at 1-26 (MKKKLLVLTMSTLFATQIMNSNHAKA) is a signal peptide.

Its subcellular location is the cell surface. In terms of biological role, adhesin that binds to the host cell extracellular matrix proteins fibronectin, fibrinogen, collagen, and vitronectin. This chain is Extracellular matrix protein-binding protein emp (emp), found in Staphylococcus aureus (strain USA300).